The chain runs to 507 residues: ATP synthase subunit alpha, chloroplastic (507 aa).

Residue 170 to 177 (GDRQTGKT) participates in ATP binding.

Belongs to the ATPase alpha/beta chains family. In terms of assembly, F-type ATPases have 2 components, CF(1) - the catalytic core - and CF(0) - the membrane proton channel. CF(1) has five subunits: alpha(3), beta(3), gamma(1), delta(1), epsilon(1). CF(0) has four main subunits: a, b, b' and c.

The protein localises to the plastid. It localises to the chloroplast thylakoid membrane. It catalyses the reaction ATP + H2O + 4 H(+)(in) = ADP + phosphate + 5 H(+)(out). Functionally, produces ATP from ADP in the presence of a proton gradient across the membrane. The alpha chain is a regulatory subunit. The polypeptide is ATP synthase subunit alpha, chloroplastic (Ceratophyllum demersum (Rigid hornwort)).